We begin with the raw amino-acid sequence, 501 residues long: Alpha-internexin (501 aa).

The tract at residues 1-87 (MSFGSEHYLC…SQAAARTNEY (87 aa)) is head. A Phosphoserine modification is found at Ser-72. Residues 88–129 (KIIRTNEKEQLQGLNDRFAVFIEKVHQLETQNRALEAELAAL) are coil 1A. Residues 94 to 407 (EKEQLQGLND…KLLEGEETRF (314 aa)) enclose the IF rod domain. The segment at 130-142 (RQRHAEPSRVGEL) is linker 1. A coil 1B region spans residues 143-238 (FQRELRELRA…QVHDEEVAEL (96 aa)). Ser-219 is subject to Phosphoserine. Positions 239–262 (LATLQASSQAAAEVDVAVAKPDLT) are linker 2. Residues 263–408 (SALREIRAQY…LLEGEETRFS (146 aa)) form a coil 2 region. At Lys-290 the chain carries N6-acetyllysine. Phosphoserine is present on residues Ser-335 and Ser-498. The tail stretch occupies residues 409-501 (TGGLSISGLN…EESTSSSQKM (93 aa)). The interval 441-501 (SAGLSLKKEE…EESTSSSQKM (61 aa)) is disordered. The segment covering 488-501 (KSATEESTSSSQKM) has biased composition (polar residues).

Belongs to the intermediate filament family. In terms of assembly, forms homodimers (in vitro). Forms heterodimers with NEFL, NEFM or NEFH (in vitro). O-glycosylated.

Functionally, class-IV neuronal intermediate filament that is able to self-assemble. It is involved in the morphogenesis of neurons. It may form an independent structural network without the involvement of other neurofilaments or it may cooperate with NEFL to form the filamentous backbone to which NEFM and NEFH attach to form the cross-bridges. May also cooperate with the neuronal intermediate filament protein PRPH to form filamentous networks. The polypeptide is Alpha-internexin (Ina) (Mus musculus (Mouse)).